A 478-amino-acid polypeptide reads, in one-letter code: MKLNKEENFSEWFDTVLRESGLYDYGRYPVKGMGVWPPFGFKLRKLVLNIIRDLLDSTGHEEVLFPVLIPKTLLEKESEHIRGFEGEVFWVTKGGHEDLDVPLALRPTSETAISYMESFWISSYKQLPMKLYQIVPVYRYETKATRPLIRLREVSTFKEAHTAHESFEGADSQCAEAIEIYKKVFDRLGIPYMISQRPPWDKFAGALYTVAFDTVMPDGRVLQIGTVHHLGQNFSVPFEVRFHTEDGDKDYVWQTSYGLSDRVIASLVAVHGDERGLVLPPEVAPVQVVIVPIPQKEEEQQRKVLEEAKRVEEELKARGWRTVLDDRDELTPGAKYYEWELKGVPFRIEIGKKEVEGDELTVARRDLKKRVKVKKGEIHQRLKEMSDDMLNNMRERAWSFMKSRIKRVRSLEEAKELVEKRYVVELPWCGSKECGLRVDEEVGRVLGVPLDEDAEAKGERCAVCGREAKWWIRVAKTY.

It belongs to the class-II aminoacyl-tRNA synthetase family. ProS type 3 subfamily. Homodimer.

It localises to the cytoplasm. The catalysed reaction is tRNA(Pro) + L-proline + ATP = L-prolyl-tRNA(Pro) + AMP + diphosphate. In terms of biological role, catalyzes the attachment of proline to tRNA(Pro) in a two-step reaction: proline is first activated by ATP to form Pro-AMP and then transferred to the acceptor end of tRNA(Pro). The chain is Proline--tRNA ligase from Ignicoccus hospitalis (strain KIN4/I / DSM 18386 / JCM 14125).